Reading from the N-terminus, the 900-residue chain is Iodate reductase subunit IdrA (900 aa).

The disordered stretch occupies residues 1 to 21; the sequence is MSENIKQGGAGTFMQAPQDSV. [3Fe-4S] cluster contacts are provided by Cys35, Cys38, and Cys42.

The protein belongs to the prokaryotic molybdopterin-containing oxidoreductase family. As to quaternary structure, the iodate reductase (Idr) complex is composed of a molybdopterin-dependent iodate reductase (IdrA and IdrB subunits) and two associated peroxidases (IdrP1 and IdrP2). It depends on [3Fe-4S] cluster as a cofactor. Requires Mo-bis(molybdopterin guanine dinucleotide) as cofactor.

Its subcellular location is the periplasm. Its function is as follows. Involved in iodate respiration. May accept electrons from cytochrome c551, and catalyze the reduction of iodate (IO(3)(-)) to produce the chemically unstable intermediate hypoiodous acid (HIO). This intermediate then undergoes abiotic disproportionation to yield two molecules of iodide (I(-)) and one molecule of iodate. The resultant iodate subsequently cycles back into the reductive pathway. The initial reduction of iodate may inadvertently produce low levels of incidental toxic H(2)O(2), which is detoxified by IdrP1 and IdrP2. This is Iodate reductase subunit IdrA from Denitromonas iodatirespirans.